Consider the following 184-residue polypeptide: Large ribosomal subunit protein uL6 (184 aa).

The protein belongs to the universal ribosomal protein uL6 family. Part of the 50S ribosomal subunit.

This protein binds to the 23S rRNA, and is important in its secondary structure. It is located near the subunit interface in the base of the L7/L12 stalk, and near the tRNA binding site of the peptidyltransferase center. In Thermotoga petrophila (strain ATCC BAA-488 / DSM 13995 / JCM 10881 / RKU-1), this protein is Large ribosomal subunit protein uL6.